The following is a 173-amino-acid chain: Large ribosomal subunit protein uL16 (173 aa).

It belongs to the universal ribosomal protein uL16 family.

The protein is Large ribosomal subunit protein uL16 of Methanosphaerula palustris (strain ATCC BAA-1556 / DSM 19958 / E1-9c).